The primary structure comprises 260 residues: Small ribosomal subunit protein bS6 (260 aa).

The protein belongs to the bacterial ribosomal protein bS6 family.

Functionally, binds together with bS18 to 16S ribosomal RNA. The chain is Small ribosomal subunit protein bS6 from Wolbachia sp. subsp. Brugia malayi (strain TRS).